Consider the following 158-residue polypeptide: Transcription elongation factor GreA (158 aa).

Positions Ala46–Glu66 form a coiled coil.

It belongs to the GreA/GreB family.

Necessary for efficient RNA polymerase transcription elongation past template-encoded arresting sites. The arresting sites in DNA have the property of trapping a certain fraction of elongating RNA polymerases that pass through, resulting in locked ternary complexes. Cleavage of the nascent transcript by cleavage factors such as GreA or GreB allows the resumption of elongation from the new 3'terminus. GreA releases sequences of 2 to 3 nucleotides. This is Transcription elongation factor GreA from Neisseria meningitidis serogroup B (strain ATCC BAA-335 / MC58).